Reading from the N-terminus, the 959-residue chain is Translation initiation factor IF-2 (959 aa).

The span at 1-10 shows a compositional bias: basic and acidic residues; that stretch reads MSDKTNDDKT. The segment at 1-374 is disordered; sequence MSDKTNDDKT…SQMQETREKI (374 aa). Over residues 27–37 the composition is skewed to polar residues; it reads EQSTVRQNFSH. Low complexity-rich tracts occupy residues 63-118 and 128-138; these read AAAA…VTKP and QRPGGQQAQRP. Basic and acidic residues-rich tracts occupy residues 154 to 225 and 232 to 241; these read SEMD…EAAK and ARSERRDDAR. Over residues 246-284 the composition is skewed to low complexity; that stretch reads GARPQQAGRPQGGRPQPAGRPQQGSPRPAPIIADAAPIA. The segment covering 318-333 has biased composition (basic and acidic residues); the sequence is PEVRAPKVVKGEDDRR. The 170-residue stretch at 457–626 folds into the tr-type G domain; the sequence is SRPPVVTIMG…LLQAEMLDLK (170 aa). Positions 466–473 are G1; that stretch reads GHVDHGKT. Position 466-473 (466-473) interacts with GTP; that stretch reads GHVDHGKT. Residues 491 to 495 are G2; it reads GITQH. The tract at residues 512-515 is G3; that stretch reads DTPG. GTP contacts are provided by residues 512 to 516 and 566 to 569; these read DTPGH and NKID. A G4 region spans residues 566-569; sequence NKID. The tract at residues 602 to 604 is G5; sequence SAK.

It belongs to the TRAFAC class translation factor GTPase superfamily. Classic translation factor GTPase family. IF-2 subfamily.

The protein resides in the cytoplasm. Its function is as follows. One of the essential components for the initiation of protein synthesis. Protects formylmethionyl-tRNA from spontaneous hydrolysis and promotes its binding to the 30S ribosomal subunits. Also involved in the hydrolysis of GTP during the formation of the 70S ribosomal complex. This is Translation initiation factor IF-2 from Brucella suis biovar 1 (strain 1330).